A 365-amino-acid chain; its full sequence is Phospho-N-acetylmuramoyl-pentapeptide-transferase (365 aa).

The next 10 membrane-spanning stretches (helical) occupy residues 3–23 (HIIIGGAVSFIIAILFTPILI), 54–74 (GIAIIVAIVGGYFLAHLASVF), 81–101 (PTASGLLVLGLTVGMGFLGFL), 119–139 (GKLLGQAVLAIGFGVLCLLFL), 162–182 (IAIGGGIIGTLIFLLFIYILV), 198–218 (LAAGTTAIVMAAYSIMTFWQF), 239–259 (LSILAACGLGACLGFLWWNAA), 263–283 (IFMGDTGSLALGGLVAGLSVT), 289–309 (LMIVIGALFVAETISVVIQVV), and 342–362 (FWLLTAMFAVAGVSMFYADWL).

The protein belongs to the glycosyltransferase 4 family. MraY subfamily. It depends on Mg(2+) as a cofactor.

Its subcellular location is the cell membrane. The enzyme catalyses UDP-N-acetyl-alpha-D-muramoyl-L-alanyl-gamma-D-glutamyl-meso-2,6-diaminopimeloyl-D-alanyl-D-alanine + di-trans,octa-cis-undecaprenyl phosphate = di-trans,octa-cis-undecaprenyl diphospho-N-acetyl-alpha-D-muramoyl-L-alanyl-D-glutamyl-meso-2,6-diaminopimeloyl-D-alanyl-D-alanine + UMP. It functions in the pathway cell wall biogenesis; peptidoglycan biosynthesis. Functionally, catalyzes the initial step of the lipid cycle reactions in the biosynthesis of the cell wall peptidoglycan: transfers peptidoglycan precursor phospho-MurNAc-pentapeptide from UDP-MurNAc-pentapeptide onto the lipid carrier undecaprenyl phosphate, yielding undecaprenyl-pyrophosphoryl-MurNAc-pentapeptide, known as lipid I. This chain is Phospho-N-acetylmuramoyl-pentapeptide-transferase, found in Corynebacterium kroppenstedtii (strain DSM 44385 / JCM 11950 / CIP 105744 / CCUG 35717).